Here is a 673-residue protein sequence, read N- to C-terminus: Bifunctional polymyxin resistance protein ArnA (673 aa).

Positions Met-1–Leu-311 are formyltransferase ArnAFT. His-104 acts as the Proton donor; for formyltransferase activity in catalysis. (6R)-10-formyltetrahydrofolate-binding positions include Arg-114 and Val-136 to Asp-140. The segment at Arg-321–Gly-673 is dehydrogenase ArnADH. NAD(+) is bound by residues Asp-354 and Asp-375–Ile-376. UDP-alpha-D-glucuronate contacts are provided by residues Ala-400, Tyr-405, and Thr-439–Ser-440. Glu-441 (proton acceptor; for decarboxylase activity) is an active-site residue. Residues Arg-467, Asn-499, Lys-533–Arg-542, and Tyr-620 contribute to the UDP-alpha-D-glucuronate site. The active-site Proton donor; for decarboxylase activity is Arg-626.

It in the N-terminal section; belongs to the Fmt family. UDP-L-Ara4N formyltransferase subfamily. This sequence in the C-terminal section; belongs to the NAD(P)-dependent epimerase/dehydratase family. UDP-glucuronic acid decarboxylase subfamily. In terms of assembly, homohexamer, formed by a dimer of trimers.

It catalyses the reaction UDP-alpha-D-glucuronate + NAD(+) = UDP-beta-L-threo-pentopyranos-4-ulose + CO2 + NADH. It carries out the reaction UDP-4-amino-4-deoxy-beta-L-arabinose + (6R)-10-formyltetrahydrofolate = UDP-4-deoxy-4-formamido-beta-L-arabinose + (6S)-5,6,7,8-tetrahydrofolate + H(+). The protein operates within nucleotide-sugar biosynthesis; UDP-4-deoxy-4-formamido-beta-L-arabinose biosynthesis; UDP-4-deoxy-4-formamido-beta-L-arabinose from UDP-alpha-D-glucuronate: step 1/3. Its pathway is nucleotide-sugar biosynthesis; UDP-4-deoxy-4-formamido-beta-L-arabinose biosynthesis; UDP-4-deoxy-4-formamido-beta-L-arabinose from UDP-alpha-D-glucuronate: step 3/3. It participates in bacterial outer membrane biogenesis; lipopolysaccharide biosynthesis. In terms of biological role, bifunctional enzyme that catalyzes the oxidative decarboxylation of UDP-glucuronic acid (UDP-GlcUA) to UDP-4-keto-arabinose (UDP-Ara4O) and the addition of a formyl group to UDP-4-amino-4-deoxy-L-arabinose (UDP-L-Ara4N) to form UDP-L-4-formamido-arabinose (UDP-L-Ara4FN). The modified arabinose is attached to lipid A and is required for resistance to polymyxin and cationic antimicrobial peptides. The sequence is that of Bifunctional polymyxin resistance protein ArnA from Pectobacterium atrosepticum (strain SCRI 1043 / ATCC BAA-672) (Erwinia carotovora subsp. atroseptica).